The chain runs to 391 residues: Formate-dependent phosphoribosylglycinamide formyltransferase (391 aa).

Residues 20–21 (EL) and Glu80 each bind N(1)-(5-phospho-beta-D-ribosyl)glycinamide. Residues Arg112, Lys153, 158–163 (SSGKGQ), 193–196 (EGFI), and Glu201 contribute to the ATP site. The 190-residue stretch at 117–306 (RLAAETLGLP…EFALHVRAIL (190 aa)) folds into the ATP-grasp domain. Mg(2+) contacts are provided by Glu265 and Glu277. Residues Asp284, Lys354, and 361-362 (RR) each bind N(1)-(5-phospho-beta-D-ribosyl)glycinamide.

This sequence belongs to the PurK/PurT family. As to quaternary structure, homodimer.

It carries out the reaction N(1)-(5-phospho-beta-D-ribosyl)glycinamide + formate + ATP = N(2)-formyl-N(1)-(5-phospho-beta-D-ribosyl)glycinamide + ADP + phosphate + H(+). Its pathway is purine metabolism; IMP biosynthesis via de novo pathway; N(2)-formyl-N(1)-(5-phospho-D-ribosyl)glycinamide from N(1)-(5-phospho-D-ribosyl)glycinamide (formate route): step 1/1. In terms of biological role, involved in the de novo purine biosynthesis. Catalyzes the transfer of formate to 5-phospho-ribosyl-glycinamide (GAR), producing 5-phospho-ribosyl-N-formylglycinamide (FGAR). Formate is provided by PurU via hydrolysis of 10-formyl-tetrahydrofolate. This is Formate-dependent phosphoribosylglycinamide formyltransferase from Shewanella oneidensis (strain ATCC 700550 / JCM 31522 / CIP 106686 / LMG 19005 / NCIMB 14063 / MR-1).